Consider the following 1625-residue polypeptide: Nonribosomal peptide synthetase aclP (1625 aa).

The Carrier 1 domain maps to 47–123; it reads TTMNPSSQLL…ALFTDLLSSE (77 aa). Serine 84 bears the O-(pantetheine 4'-phosphoryl)serine mark. The tract at residues 127 to 157 is disordered; sequence IPIPDPSDDSDDLSNPSSSTGGSPRVATPIS. The tract at residues 286–567 is condensation 1; the sequence is ASSQSTVIWA…KYFQRALQLL (282 aa). The interval 614–997 is adenylation; the sequence is FESAVSRNPM…GRTDRQIKLR (384 aa). A Carrier 2 domain is found at 1096-1171; that stretch reads SPMEKLVGDA…HLAAAIDSGL (76 aa). The residue at position 1131 (serine 1131) is an O-(pantetheine 4'-phosphoryl)serine. The interval 1195-1585 is condensation 2; that stretch reads EWWHKYQINE…LQARIPLALS (391 aa).

Belongs to the NRP synthetase family.

It functions in the pathway mycotoxin biosynthesis. Its function is as follows. Nonribosomal peptide synthetase; part of the gene cluster that mediates the biosynthesis of aspirochlorine (or antibiotic A30641), an unusual halogenated spiro compound with distinctive antifungal properties due to selective inhibition of protein biosynthesis, and which is also active against bacteria, viruses, and murine tumor cells. The non-ribosomal peptide synthetase (NRPS) aclP is responsible the formation of the diketopiperazine (DKP) core from the condensation of 2 phenylalanine residues. One Phe residue is tailored into chlorotyrosine by hydroxylation and chlorination, whereas the second Phe undergoes an unprecedented C-C bond cleavage to be converted into glycine. After formation of the DKP, sulfur is incorporated into the DKP by conjugation with glutathione by aclG, followed by its stepwise degradation to the thiol by aclI, aclJ and aclK, and the dithiol oxidation by aclT. In addition, oxygenases (aclB, aclC, aclL and aclO) and O-methyltransferases (aclM and aclU) act as tailoring enzymes to produce the intermediate dechloroaspirochlorine. Ultimately, chlorination of dechloroaspirochlorine by the halogenase aclH is the last step in the aspirochlorine pathway. The sequence is that of Nonribosomal peptide synthetase aclP from Aspergillus oryzae (strain ATCC 42149 / RIB 40) (Yellow koji mold).